Consider the following 247-residue polypeptide: 3-deoxy-manno-octulosonate cytidylyltransferase (247 aa).

The protein belongs to the KdsB family.

It is found in the cytoplasm. The catalysed reaction is 3-deoxy-alpha-D-manno-oct-2-ulosonate + CTP = CMP-3-deoxy-beta-D-manno-octulosonate + diphosphate. The protein operates within nucleotide-sugar biosynthesis; CMP-3-deoxy-D-manno-octulosonate biosynthesis; CMP-3-deoxy-D-manno-octulosonate from 3-deoxy-D-manno-octulosonate and CTP: step 1/1. Its pathway is bacterial outer membrane biogenesis; lipopolysaccharide biosynthesis. In terms of biological role, activates KDO (a required 8-carbon sugar) for incorporation into bacterial lipopolysaccharide in Gram-negative bacteria. This chain is 3-deoxy-manno-octulosonate cytidylyltransferase, found in Leptospira interrogans serogroup Icterohaemorrhagiae serovar Lai (strain 56601).